A 295-amino-acid chain; its full sequence is Ribosomal RNA small subunit methyltransferase A (295 aa).

Positions 29, 31, 56, 77, 102, and 128 each coordinate S-adenosyl-L-methionine.

This sequence belongs to the class I-like SAM-binding methyltransferase superfamily. rRNA adenine N(6)-methyltransferase family. RsmA subfamily.

The protein localises to the cytoplasm. The enzyme catalyses adenosine(1518)/adenosine(1519) in 16S rRNA + 4 S-adenosyl-L-methionine = N(6)-dimethyladenosine(1518)/N(6)-dimethyladenosine(1519) in 16S rRNA + 4 S-adenosyl-L-homocysteine + 4 H(+). In terms of biological role, specifically dimethylates two adjacent adenosines (A1518 and A1519) in the loop of a conserved hairpin near the 3'-end of 16S rRNA in the 30S particle. May play a critical role in biogenesis of 30S subunits. The protein is Ribosomal RNA small subunit methyltransferase A of Listeria monocytogenes serotype 4a (strain HCC23).